We begin with the raw amino-acid sequence, 255 residues long: DNA repair protein RecO (255 aa).

This sequence belongs to the RecO family.

In terms of biological role, involved in DNA repair and RecF pathway recombination. The sequence is that of DNA repair protein RecO from Listeria monocytogenes serotype 4b (strain CLIP80459).